A 233-amino-acid chain; its full sequence is uncharacterized protein (233 aa).

The protein belongs to the RHS family.

This is an uncharacterized protein from Escherichia coli (strain K12).